Here is a 391-residue protein sequence, read N- to C-terminus: ATP phosphoribosyltransferase regulatory subunit (391 aa).

This sequence belongs to the class-II aminoacyl-tRNA synthetase family. HisZ subfamily. In terms of assembly, heteromultimer composed of HisG and HisZ subunits.

It is found in the cytoplasm. The protein operates within amino-acid biosynthesis; L-histidine biosynthesis; L-histidine from 5-phospho-alpha-D-ribose 1-diphosphate: step 1/9. Functionally, required for the first step of histidine biosynthesis. May allow the feedback regulation of ATP phosphoribosyltransferase activity by histidine. This Clostridium kluyveri (strain ATCC 8527 / DSM 555 / NBRC 12016 / NCIMB 10680 / K1) protein is ATP phosphoribosyltransferase regulatory subunit.